The sequence spans 141 residues: Large ribosomal subunit protein uL16 (141 aa).

The protein belongs to the universal ribosomal protein uL16 family. In terms of assembly, part of the 50S ribosomal subunit.

Functionally, binds 23S rRNA and is also seen to make contacts with the A and possibly P site tRNAs. The sequence is that of Large ribosomal subunit protein uL16 from Geobacillus kaustophilus (strain HTA426).